A 365-amino-acid chain; its full sequence is MTITGIIAEFNPFHNGHKYLLDQAEGLKIVAMSGNFMQRGEPAIVDKWTRAQMALENGADLVVELPFLVSVQAADFFGQGAVDILDRLGIDSLVFGTEEVRDYQKIADLYTEKGTEMEKFVENLPDSLSYPQKTQAMWKEFAGLDFSGNTPNHVLALAYAKAVAGRNIKLHPIQRQGAGYHSVNKDVDFASATALRQHQKDQDFLERFMPSVALFEQASKVIWEDYFPLLRYQILSNPDLTTIYQVNQEMAVRIKEAIKTAQSVEELVELVTTKRYTKARVRRLLSYILAQARENVLPEAIHVLGFTEKGRQHLKSLKGQVSLVSRIGKEPWDAMTQKADQIYQLGNLSIAQQNFGRVPIRIETN.

ATP contacts are provided by residues 7 to 20, Gly-96, Asn-152, and Arg-175; that span reads IAEF…HKYL.

The protein belongs to the TmcAL family.

The protein resides in the cytoplasm. It catalyses the reaction cytidine(34) in elongator tRNA(Met) + acetate + ATP = N(4)-acetylcytidine(34) in elongator tRNA(Met) + AMP + diphosphate. Functionally, catalyzes the formation of N(4)-acetylcytidine (ac(4)C) at the wobble position of elongator tRNA(Met), using acetate and ATP as substrates. First activates an acetate ion to form acetyladenylate (Ac-AMP) and then transfers the acetyl group to tRNA to form ac(4)C34. In Streptococcus pneumoniae (strain ATCC 700669 / Spain 23F-1), this protein is tRNA(Met) cytidine acetate ligase.